The chain runs to 160 residues: Transcription elongation factor GreA (160 aa).

Positions 2–81 (AEKKNILTYE…KNAEVVVEDE (80 aa)) form a coiled coil. Residues 36–55 (KEAREQGDLSENAEYDAAKD) are disordered.

Belongs to the GreA/GreB family.

In terms of biological role, necessary for efficient RNA polymerase transcription elongation past template-encoded arresting sites. The arresting sites in DNA have the property of trapping a certain fraction of elongating RNA polymerases that pass through, resulting in locked ternary complexes. Cleavage of the nascent transcript by cleavage factors such as GreA or GreB allows the resumption of elongation from the new 3'terminus. GreA releases sequences of 2 to 3 nucleotides. The chain is Transcription elongation factor GreA from Lachnoclostridium phytofermentans (strain ATCC 700394 / DSM 18823 / ISDg) (Clostridium phytofermentans).